Reading from the N-terminus, the 345-residue chain is Phenylalanine--tRNA ligase alpha subunit (345 aa).

Glu-253 provides a ligand contact to Mg(2+).

The protein belongs to the class-II aminoacyl-tRNA synthetase family. Phe-tRNA synthetase alpha subunit type 1 subfamily. Tetramer of two alpha and two beta subunits. Mg(2+) serves as cofactor.

Its subcellular location is the cytoplasm. The enzyme catalyses tRNA(Phe) + L-phenylalanine + ATP = L-phenylalanyl-tRNA(Phe) + AMP + diphosphate + H(+). This Nitratidesulfovibrio vulgaris (strain DP4) (Desulfovibrio vulgaris) protein is Phenylalanine--tRNA ligase alpha subunit.